A 469-amino-acid polypeptide reads, in one-letter code: Calcium/calmodulin-dependent protein kinase type IV (469 aa).

Residues S11 and S12 each carry the phosphoserine; by autocatalysis modification. Residues 42–296 enclose the Protein kinase domain; the sequence is FEVESELGRG…TFQALQHPWV (255 aa). ATP is bound by residues 48–56 and K71; that span reads LGRGATSIV. A glycan (O-linked (GlcNAc) threonine) is linked at T53. S54 carries an O-linked (GlcNAc) serine glycan. S133 is a glycosylation site (O-linked (GlcNAc) serine). D160 serves as the catalytic Proton acceptor. O-linked (GlcNAc) serine glycosylation is present at S185. The residue at position 196 (T196) is a Phosphothreonine. The autoinhibitory domain stretch occupies residues 297 to 336; sequence TGKAANFVHMDTAQKKLQEFNARRKLKAAVKAVVASSRLG. The segment at 302–319 is PP2A-binding; the sequence is NFVHMDTAQKKLQEFNAR. A calmodulin-binding region spans residues 318-337; the sequence is ARRKLKAAVKAVVASSRLGS. Phosphoserine; by autocatalysis is present on S332. The tract at residues 336–469 is disordered; it reads GSASSSHTSI…PQQDAIQPEY (134 aa). S337 is subject to Phosphoserine. Residues S340, S341, and S352 are each glycosylated (O-linked (GlcNAc) serine). The segment covering 360-374 has biased composition (basic and acidic residues); the sequence is DAKDSTDLLGKKMQE. Positions 375-388 are enriched in acidic residues; that stretch reads EDQEEDQVEAEASA. Positions 389–409 are enriched in basic and acidic residues; it reads DEMRKLQSEEVEKDAGVKEEE. The span at 417–426 shows a compositional bias: acidic residues; it reads DPEDELETDD. Basic and acidic residues predominate over residues 427–441; sequence PEMKRDSEEKLKSVE. Phosphoserine occurs at positions 433 and 439. Over residues 442 to 453 the composition is skewed to acidic residues; sequence EEMDPMTEEEAP.

Belongs to the protein kinase superfamily. CAMK Ser/Thr protein kinase family. CaMK subfamily. Monomer. Interacts with protein phosphatase 2A (PPP2CA/PPP2CB); the interaction is mutually exclusive with binding to Ca(2+)/calmodulin. Post-translationally, phosphorylated by CaMKK1 and CaMKK2 on Thr-196. Dephosphorylated by protein phosphatase 2A. Autophosphorylated on Ser-11 and Ser-12. Glycosylation at Ser-185 modulates the phosphorylation of CaMK4 at Thr-196 and negatively regulates its activity toward CREB1 in basal conditions and during early inomycin stimulation. Expressed in brain and testis.

It localises to the cytoplasm. The protein localises to the nucleus. It carries out the reaction L-seryl-[protein] + ATP = O-phospho-L-seryl-[protein] + ADP + H(+). It catalyses the reaction L-threonyl-[protein] + ATP = O-phospho-L-threonyl-[protein] + ADP + H(+). With respect to regulation, activated by Ca(2+)/calmodulin. Binding of calmodulin results in conformational change that relieves intrasteric autoinhibition and allows phosphorylation of Thr-196 within the activation loop by CaMKK1 or CaMKK2. Phosphorylation of Thr-196 results in a 10-20-fold increase in total activity to generate Ca(2+)/calmodulin-independent activity. Autophosphorylation of the N-terminus Ser-11 and Ser-12 is required for full activation. Inactivated by protein phosphatase 2A (PPP2CA/PPP2CB) which dephosphorylates Thr-196, thereby terminating autonomous activity and helping to maintain the enzyme in its autoinhibited state. Functionally, calcium/calmodulin-dependent protein kinase that operates in the calcium-triggered CaMKK-CaMK4 signaling cascade and regulates, mainly by phosphorylation, the activity of several transcription activators, such as CREB1, MEF2D, JUN and RORA, which play pivotal roles in immune response, inflammation, and memory consolidation. In the thymus, regulates the CD4(+)/CD8(+) double positive thymocytes selection threshold during T-cell ontogeny. In CD4 memory T-cells, is required to link T-cell antigen receptor (TCR) signaling to the production of IL2, IFNG and IL4 (through the regulation of CREB and MEF2). Regulates the differentiation and survival phases of osteoclasts and dendritic cells (DCs). Mediates DCs survival by linking TLR4 and the regulation of temporal expression of BCL2. Phosphorylates the transcription activator CREB1 on 'Ser-133' in hippocampal neuron nuclei and contribute to memory consolidation and long term potentiation (LTP) in the hippocampus. Can activate the MAP kinases MAPK1/ERK2, MAPK8/JNK1 and MAPK14/p38 and stimulate transcription through the phosphorylation of ELK1 and ATF2. Can also phosphorylate in vitro CREBBP, PRM2, MEF2A and STMN1/OP18. May be involved in spermatogenesis. This chain is Calcium/calmodulin-dependent protein kinase type IV (Camk4), found in Mus musculus (Mouse).